The chain runs to 502 residues: ATP synthase subunit alpha (502 aa).

Residue 169–176 (GDRQTGKT) participates in ATP binding.

This sequence belongs to the ATPase alpha/beta chains family. As to quaternary structure, F-type ATPases have 2 components, CF(1) - the catalytic core - and CF(0) - the membrane proton channel. CF(1) has five subunits: alpha(3), beta(3), gamma(1), delta(1), epsilon(1). CF(0) has three main subunits: a(1), b(2) and c(9-12). The alpha and beta chains form an alternating ring which encloses part of the gamma chain. CF(1) is attached to CF(0) by a central stalk formed by the gamma and epsilon chains, while a peripheral stalk is formed by the delta and b chains.

The protein localises to the cell membrane. It carries out the reaction ATP + H2O + 4 H(+)(in) = ADP + phosphate + 5 H(+)(out). Produces ATP from ADP in the presence of a proton gradient across the membrane. The alpha chain is a regulatory subunit. The polypeptide is ATP synthase subunit alpha (Streptococcus pyogenes serotype M18 (strain MGAS8232)).